The following is a 2453-amino-acid chain: Nuclear receptor corepressor 1 (2453 aa).

Positions methionine 1–phenylalanine 29 are enriched in polar residues. 3 disordered regions span residues methionine 1–aspartate 116, proline 147–serine 177, and glutamine 206–lysine 231. The tract at residues methionine 1–isoleucine 373 is interaction with ZBTB33 and HEXIM1. Residues serine 51 to glutamine 64 are compositionally biased toward low complexity. Basic and acidic residues-rich tracts occupy residues proline 77–glycine 88 and valine 99–aspartate 116. Serine 172 bears the Phosphoserine mark. Residues serine 174–proline 216 are a coiled coil. A compositionally biased stretch (basic and acidic residues) spans glutamate 212–lysine 221. Serine 224 bears the Phosphoserine mark. The segment at phenylalanine 254 to aspartate 312 is interaction with SIN3A/B. A coiled-coil region spans residues alanine 299–asparagine 328. The SANT 1 domain occupies glutamine 435–asparagine 486. Disordered regions lie at residues lysine 497–glutamate 631 and leucine 677–glutamine 908. Residues arginine 501–glutamate 550 are a coiled coil. Basic and acidic residues-rich tracts occupy residues serine 509–glutamate 531 and lysine 541–alanine 556. Over residues glutamate 592 to glutamate 604 the composition is skewed to low complexity. The span at glutamate 605–proline 616 shows a compositional bias: pro residues. Residues valine 622–asparagine 673 form the SANT 2 domain. Polar residues predominate over residues glutamine 697 to alanine 707. The segment covering glutamine 708–glycine 727 has biased composition (acidic residues). A compositionally biased stretch (low complexity) spans threonine 771–threonine 787. The span at glycine 851–proline 885 shows a compositional bias: basic and acidic residues. A Phosphoserine modification is found at serine 1011. The segment at valine 1034–serine 1058 is disordered. Lysine 1117 is covalently cross-linked (Glycyl lysine isopeptide (Lys-Gly) (interchain with G-Cter in SUMO1); alternate). Lysine 1117 is covalently cross-linked (Glycyl lysine isopeptide (Lys-Gly) (interchain with G-Cter in SUMO2); alternate). Serine 1122 carries the post-translational modification Phosphoserine. A Glycyl lysine isopeptide (Lys-Gly) (interchain with G-Cter in SUMO2) cross-link involves residue lysine 1195. 5 positions are modified to phosphoserine: serine 1206, serine 1207, serine 1274, serine 1292, and serine 1333. Lysine 1347 carries the post-translational modification N6-acetyllysine. At threonine 1378 the chain carries Phosphothreonine. A Glycyl lysine isopeptide (Lys-Gly) (interchain with G-Cter in SUMO2) cross-link involves residue lysine 1400. Residue lysine 1423 forms a Glycyl lysine isopeptide (Lys-Gly) (interchain with G-Cter in SUMO2); alternate linkage. Residue lysine 1423 is modified to N6-acetyllysine; alternate. Residues glycine 1450–glycine 1544 form a disordered region. Phosphoserine occurs at positions 1459 and 1481. Residues serine 1459–arginine 1469 are compositionally biased toward polar residues. Residues valine 1495–valine 1514 show a composition bias toward polar residues. The interval arginine 1510 to aspartate 2453 is interaction with C1D. A Glycyl lysine isopeptide (Lys-Gly) (interchain with G-Cter in SUMO2) cross-link involves residue lysine 1525. A Phosphoserine modification is found at serine 1598. Disordered regions lie at residues arginine 1697–glutamine 1780 and alanine 1902–glycine 1939. Composition is skewed to basic and acidic residues over residues alanine 1718 to isoleucine 1745 and alanine 1919 to threonine 1937. The CORNR box 1 signature appears at isoleucine 1949–isoleucine 1953. The interval serine 1959–valine 2060 is disordered. The span at serine 1968–serine 1979 shows a compositional bias: low complexity. Phosphoserine is present on residues serine 1993 and serine 1997. An ID1 region spans residues proline 2050–proline 2129. The required for interaction with RARA in the absence of its ligand stretch occupies residues arginine 2065–threonine 2068. Residues isoleucine 2073–isoleucine 2077 carry the CORNR box 2 motif. Over residues serine 2088–valine 2124 the composition is skewed to polar residues. The disordered stretch occupies residues serine 2088–glutamate 2174. Residues serine 2116, serine 2134, serine 2150, serine 2165, and serine 2198 each carry the phosphoserine modification. The span at leucine 2138–isoleucine 2156 shows a compositional bias: basic and acidic residues. An ID2 region spans residues isoleucine 2226–glycine 2287. Positions leucine 2277 to isoleucine 2281 match the CORNR box 3 motif. Residues proline 2303–phenylalanine 2396 form a disordered region. Residues serine 2310–serine 2319 are compositionally biased toward low complexity. A Phosphothreonine modification is found at threonine 2412. Residues serine 2449 and serine 2451 each carry the phosphoserine modification.

Belongs to the N-CoR nuclear receptor corepressors family. In terms of assembly, forms a large corepressor complex that contains SIN3A/B and histone deacetylases HDAC1 and HDAC2. This complex associates with the thyroid receptor (TR) and the retinoid acid receptor (RAR) in the absence of ligand. Interacts directly with RARA; the interaction is facilitated with RARA trimethylation. Component of the N-Cor repressor complex, at least composed of CBFA2T3, HEXIM1, NCOR1, NCOR2, HDAC3, TBL1X, TBL1XR1, CORO2A and GPS2. Interacts with ZBTB33; the interaction serves to recruit the N-CoR complex to promoter regions containing methylated CpG dinucleotides. Interacts with TRIM28 and KDM3A. Interacts (via the RD1 domain) with BAZ1A (via its N-terminal); the interaction corepresses a number of NCOR1-regulated genes. Interacts with BCL6, C1D, DACH1, HEXIM1, HDAC7, RORA, RORC, SAP30, SIAH2, SIN3A and SIN3B. May interact with DEAF1. Interacts with RXRA. Interacts with SETD5. Interacts with VDR. Interacts with ZBTB7A. Interacts with AR. Interacts with HDAC3. Ubiquitinated; mediated by SIAH2 and leading to its subsequent proteasomal degradation. Ubiquitous.

It is found in the nucleus. In terms of biological role, mediates transcriptional repression by certain nuclear receptors. Part of a complex which promotes histone deacetylation and the formation of repressive chromatin structures which may impede the access of basal transcription factors. Participates in the transcriptional repressor activity produced by BCL6. Recruited by ZBTB7A to the androgen response elements/ARE on target genes, negatively regulates androgen receptor signaling and androgen-induced cell proliferation. Mediates the NR1D1-dependent repression and circadian regulation of TSHB expression. The NCOR1-HDAC3 complex regulates the circadian expression of the core clock gene ARTNL/BMAL1 and the genes involved in lipid metabolism in the liver. The chain is Nuclear receptor corepressor 1 (Ncor1) from Mus musculus (Mouse).